The sequence spans 262 residues: GTP cyclohydrolase FolE2 (262 aa).

This sequence belongs to the GTP cyclohydrolase IV family.

It catalyses the reaction GTP + H2O = 7,8-dihydroneopterin 3'-triphosphate + formate + H(+). It functions in the pathway cofactor biosynthesis; 7,8-dihydroneopterin triphosphate biosynthesis; 7,8-dihydroneopterin triphosphate from GTP: step 1/1. Functionally, converts GTP to 7,8-dihydroneopterin triphosphate. The chain is GTP cyclohydrolase FolE2 from Dichelobacter nodosus (strain VCS1703A).